The primary structure comprises 492 residues: Protein adenylyltransferase Fic (492 aa).

Residues M1 to Q17 are compositionally biased toward low complexity. The tract at residues M1–P21 is disordered. A helical membrane pass occupies residues L33 to S55. TPR repeat units lie at residues A118–H151 and P152–N186. The Inhibitory (S/T)XXXE(G/N) motif motif lies at S243–G248. Residues E247 and V328–H331 each bind ATP. One can recognise a Fido domain in the interval I297 to D432. The active site involves H375. ATP is bound by residues D379 to R386, Y411 to Y412, and N419.

Belongs to the fic family. Homodimer.

The protein resides in the membrane. It catalyses the reaction L-tyrosyl-[protein] + ATP = O-(5'-adenylyl)-L-tyrosyl-[protein] + diphosphate. The catalysed reaction is L-threonyl-[protein] + ATP = 3-O-(5'-adenylyl)-L-threonyl-[protein] + diphosphate. It carries out the reaction 3-O-(5'-adenylyl)-L-threonyl-[protein] + H2O = L-threonyl-[protein] + AMP + H(+). The side chain of Glu-247 determines which of the two opposing activities (AMPylase or de-AMPylase) will take place. In response to endoplasmic reticulum stress, mediates de-AMPylase activity. Adenylyltransferase activity is inhibited by the inhibitory helix present at the N-terminus: Glu-247 binds ATP and competes with ATP-binding at Arg-386, thereby preventing adenylyltransferase activity. In unstressed cells, disengagement of Glu-247 promotes adenylyltransferase activity. Activation dissociates ATP-binding from Glu-247, allowing ordered binding of the entire ATP moiety with the alpha-phosphate in an orientation that is productive for accepting an incoming target hydroxyl side chain. Protein that can both mediate the addition of adenosine 5'-monophosphate (AMP) to specific residues of target proteins (AMPylation), and the removal of the same modification from target proteins (de-AMPylation), depending on the context. The side chain of Glu-247 determines which of the two opposing activities (AMPylase or de-AMPylase) will take place. Acts as a key regulator of the unfolded protein response (UPR) by mediating AMPylation or de-AMPylation of Hsc70-3/BiP. In unstressed cells, acts as an adenylyltransferase by mediating AMPylation of Hsc70-3/BiP at 'Thr-518', thereby inactivating it. In response to endoplasmic reticulum stress, acts as a phosphodiesterase by mediating removal of ATP (de-AMPylation) from Hsc70-3/BiP at 'Thr-518', leading to restore HSPA5/BiP activity. The polypeptide is Protein adenylyltransferase Fic (Drosophila simulans (Fruit fly)).